We begin with the raw amino-acid sequence, 527 residues long: Baeyer-Villiger monooxygenase (527 aa).

FAD is bound by residues Ser36, Glu56, 64–67 (TWRV), Asp76, Tyr82, and Ile125. 74–76 (ACD) contacts NADP(+). NADP(+) is bound by residues 199 to 205 (TGASAIQ), 222 to 223 (RT), and 308 to 309 (KR). Met415 contributes to the FAD binding site.

Belongs to the FAD-binding monooxygenase family. FAD serves as cofactor.

Catalyzes a Baeyer-Villiger oxidation reaction, i.e. the insertion of an oxygen atom into a carbon-carbon bond adjacent to a carbonyl, which converts ketones to esters or lactones using NADPH and/or NADH as an electron donor. Thus, can convert bicyclo[3.2.0]hept-2-en-6-one into the oxidative lactone products 2-oxabicyclo[3.3.0]oct-6-en-3-one and 3-oxabicyclo[3.3.0]oct-6-en-2-one. Is also able to catalyze the sulfoxidation of methyl phenyl sulfide (thioanisole). The chain is Baeyer-Villiger monooxygenase from Pseudomonas aeruginosa (strain ATCC 15692 / DSM 22644 / CIP 104116 / JCM 14847 / LMG 12228 / 1C / PRS 101 / PAO1).